Consider the following 275-residue polypeptide: 3-methyl-2-oxobutanoate hydroxymethyltransferase (275 aa).

The Mg(2+) site is built by Asp-44 and Asp-83. Residues 44–45 (DS), Asp-83, and Lys-113 each bind 3-methyl-2-oxobutanoate. Glu-115 is a binding site for Mg(2+). The Proton acceptor role is filled by Glu-182.

Belongs to the PanB family. As to quaternary structure, homodecamer; pentamer of dimers. Mg(2+) is required as a cofactor.

The protein localises to the cytoplasm. The catalysed reaction is 3-methyl-2-oxobutanoate + (6R)-5,10-methylene-5,6,7,8-tetrahydrofolate + H2O = 2-dehydropantoate + (6S)-5,6,7,8-tetrahydrofolate. Its pathway is cofactor biosynthesis; (R)-pantothenate biosynthesis; (R)-pantoate from 3-methyl-2-oxobutanoate: step 1/2. Its function is as follows. Catalyzes the reversible reaction in which hydroxymethyl group from 5,10-methylenetetrahydrofolate is transferred onto alpha-ketoisovalerate to form ketopantoate. This chain is 3-methyl-2-oxobutanoate hydroxymethyltransferase, found in Clostridium botulinum (strain 657 / Type Ba4).